We begin with the raw amino-acid sequence, 114 residues long: Dihydroneopterin monophosphate aldolase (114 aa).

3 residues coordinate Zn(2+): histidine 15, histidine 26, and histidine 28.

The protein belongs to the PTPS family. Zn(2+) is required as a cofactor.

It catalyses the reaction 7,8-dihydroneopterin 3'-phosphate = glycolaldehyde phosphate + 6-hydroxymethyl-7,8-dihydropterin. Catalyzes the conversion of 7,8-dihydroneopterin monophosphate (H2NMP) to 6-hydroxymethyl-7,8-dihydropterin (6-HMD). Cannot use 7,8-dihydroneopterin (H2Neo) or 7,8-dihydroneopterin triphosphate (H2NTP) as substrate. The polypeptide is Dihydroneopterin monophosphate aldolase (Pyrococcus furiosus (strain ATCC 43587 / DSM 3638 / JCM 8422 / Vc1)).